The chain runs to 226 residues: Elongation factor 1-delta (226 aa).

A disordered region spans residues 82-131 (SSVATPPVADTKASAAEDDDDDDVDLFGEETEEEKKASEERAAAVKASGK). Over residues 97–113 (AEDDDDDDVDLFGEETE) the composition is skewed to acidic residues. Residues 114–124 (EEKKASEERAA) show a composition bias toward basic and acidic residues.

Belongs to the EF-1-beta/EF-1-delta family. In terms of assembly, EF-1 is composed of 4 subunits: alpha, beta (1B-alpha=beta'), delta (1B-beta), and gamma (1B-gamma).

In terms of biological role, EF-1-beta and EF-1-beta' stimulate the exchange of GDP bound to EF-1-alpha to GTP. This chain is Elongation factor 1-delta, found in Spuriopimpinella brachycarpa (Chamnamul).